A 456-amino-acid chain; its full sequence is MLPSQSPAIFTVSRLNQTVRLLLEHEMGQVWISGEISNFTQPASGHWYFTLKDDTAQVRCAMFRNSNRRVTFRPQHGQQVLVRANITLYEPRGDYQIIVESMQPAGEGLLQQKYEQLKAKLQAEGLFDQQYKKPLPSPAHCVGVITSKTGAALHDILHVLKRRDPSLPVIIYPTAVQGDDAPGQIVRAIELANQRNECDVLIVGRGGGSLEDLWSFNDERVARAIFASRIPVVSAVGHETDVTIADFVADLRAPTPSAAAEVVSRNQQELLRQVQSARQRLEMAMDYYLANRTRRFTQIHHRLQQQHPQLRLARQQTMLERLKKRMSFALENQLKRAGQQQQRLTQRLNQQNPQPKIHRAQTRIQQLEYRLAEILRAQLSATRERFGNAVTHLEAVSPLSTLARGYSVTTATDGNVLKKVKQVKAGEMLTTRLEDGWIESEVKNIQPVKKSRKKVH.

Belongs to the XseA family. As to quaternary structure, heterooligomer composed of large and small subunits.

The protein localises to the cytoplasm. The enzyme catalyses Exonucleolytic cleavage in either 5'- to 3'- or 3'- to 5'-direction to yield nucleoside 5'-phosphates.. In terms of biological role, bidirectionally degrades single-stranded DNA into large acid-insoluble oligonucleotides, which are then degraded further into small acid-soluble oligonucleotides. The protein is Exodeoxyribonuclease 7 large subunit of Escherichia coli (strain ATCC 8739 / DSM 1576 / NBRC 3972 / NCIMB 8545 / WDCM 00012 / Crooks).